The primary structure comprises 434 residues: Potassium/proton antiporter CemA (434 aa).

The next 5 helical transmembrane spans lie at 75–95, 210–230, 311–331, 359–379, and 395–415; these read LLEY…SLFF, LASL…SFFF, IVLH…LFIL, ILLL…EIVI, and ISCF…YLIF.

It belongs to the CemA family.

The protein localises to the plastid. It localises to the chloroplast inner membrane. The catalysed reaction is K(+)(in) + H(+)(out) = K(+)(out) + H(+)(in). Its function is as follows. Contributes to K(+)/H(+) antiport activity by supporting proton efflux to control proton extrusion and homeostasis in chloroplasts in a light-dependent manner to modulate photosynthesis. Prevents excessive induction of non-photochemical quenching (NPQ) under continuous-light conditions. Indirectly promotes efficient inorganic carbon uptake into chloroplasts. The protein is Potassium/proton antiporter CemA of Marchantia polymorpha (Common liverwort).